The primary structure comprises 171 residues: Crossover junction endodeoxyribonuclease RuvC (171 aa).

Residues Asp-7, Glu-66, and Asp-138 contribute to the active site. Residues Asp-7, Glu-66, and Asp-138 each contribute to the Mg(2+) site.

Belongs to the RuvC family. As to quaternary structure, homodimer which binds Holliday junction (HJ) DNA. The HJ becomes 2-fold symmetrical on binding to RuvC with unstacked arms; it has a different conformation from HJ DNA in complex with RuvA. In the full resolvosome a probable DNA-RuvA(4)-RuvB(12)-RuvC(2) complex forms which resolves the HJ. It depends on Mg(2+) as a cofactor.

It is found in the cytoplasm. The catalysed reaction is Endonucleolytic cleavage at a junction such as a reciprocal single-stranded crossover between two homologous DNA duplexes (Holliday junction).. In terms of biological role, the RuvA-RuvB-RuvC complex processes Holliday junction (HJ) DNA during genetic recombination and DNA repair. Endonuclease that resolves HJ intermediates. Cleaves cruciform DNA by making single-stranded nicks across the HJ at symmetrical positions within the homologous arms, yielding a 5'-phosphate and a 3'-hydroxyl group; requires a central core of homology in the junction. The consensus cleavage sequence is 5'-(A/T)TT(C/G)-3'. Cleavage occurs on the 3'-side of the TT dinucleotide at the point of strand exchange. HJ branch migration catalyzed by RuvA-RuvB allows RuvC to scan DNA until it finds its consensus sequence, where it cleaves and resolves the cruciform DNA. This Francisella tularensis subsp. mediasiatica (strain FSC147) protein is Crossover junction endodeoxyribonuclease RuvC.